Reading from the N-terminus, the 157-residue chain is Crossover junction endodeoxyribonuclease RuvC (157 aa).

Catalysis depends on residues aspartate 7, glutamate 66, and aspartate 139. Mg(2+)-binding residues include aspartate 7, glutamate 66, and aspartate 139.

The protein belongs to the RuvC family. In terms of assembly, homodimer which binds Holliday junction (HJ) DNA. The HJ becomes 2-fold symmetrical on binding to RuvC with unstacked arms; it has a different conformation from HJ DNA in complex with RuvA. In the full resolvosome a probable DNA-RuvA(4)-RuvB(12)-RuvC(2) complex forms which resolves the HJ. The cofactor is Mg(2+).

It localises to the cytoplasm. The enzyme catalyses Endonucleolytic cleavage at a junction such as a reciprocal single-stranded crossover between two homologous DNA duplexes (Holliday junction).. The RuvA-RuvB-RuvC complex processes Holliday junction (HJ) DNA during genetic recombination and DNA repair. Endonuclease that resolves HJ intermediates. Cleaves cruciform DNA by making single-stranded nicks across the HJ at symmetrical positions within the homologous arms, yielding a 5'-phosphate and a 3'-hydroxyl group; requires a central core of homology in the junction. The consensus cleavage sequence is 5'-(A/T)TT(C/G)-3'. Cleavage occurs on the 3'-side of the TT dinucleotide at the point of strand exchange. HJ branch migration catalyzed by RuvA-RuvB allows RuvC to scan DNA until it finds its consensus sequence, where it cleaves and resolves the cruciform DNA. The protein is Crossover junction endodeoxyribonuclease RuvC of Helicobacter pylori (strain J99 / ATCC 700824) (Campylobacter pylori J99).